The sequence spans 210 residues: HTH-type transcriptional repressor FabR (210 aa).

The region spanning 10 to 70 (KTRRSLVEAA…TMVDESGLML (61 aa)) is the HTH tetR-type domain. Residues 33 to 52 (SLREVAREAGIAPTSFYRHF) constitute a DNA-binding region (H-T-H motif).

Homodimer.

The protein resides in the cytoplasm. Functionally, represses the transcription of fabB, involved in unsaturated fatty acid (UFA) biosynthesis. By controlling UFA production, FabR directly influences the physical properties of the membrane bilayer. This chain is HTH-type transcriptional repressor FabR, found in Salmonella choleraesuis (strain SC-B67).